Here is a 123-residue protein sequence, read N- to C-terminus: MATINQLVRQPRKRVVEKSDVPALQNCPQRRGVCTRVYTTTPKKPNSALRKVCRVRLTNGYEVASYIGGEGHNLQEHSVVLIRGGRVRDLPGVRYHTVRGSLDTSGVKDRKQGRSKYGAKRPK.

A 3-methylthioaspartic acid modification is found at D89. The interval S101–K123 is disordered. Basic residues predominate over residues G113 to K123.

Belongs to the universal ribosomal protein uS12 family. In terms of assembly, part of the 30S ribosomal subunit. Contacts proteins S8 and S17. May interact with IF1 in the 30S initiation complex.

In terms of biological role, with S4 and S5 plays an important role in translational accuracy. Interacts with and stabilizes bases of the 16S rRNA that are involved in tRNA selection in the A site and with the mRNA backbone. Located at the interface of the 30S and 50S subunits, it traverses the body of the 30S subunit contacting proteins on the other side and probably holding the rRNA structure together. The combined cluster of proteins S8, S12 and S17 appears to hold together the shoulder and platform of the 30S subunit. This Stutzerimonas stutzeri (strain A1501) (Pseudomonas stutzeri) protein is Small ribosomal subunit protein uS12.